A 359-amino-acid chain; its full sequence is MATH domain and coiled-coil domain-containing protein At2g42475 (359 aa).

The MATH domain maps to 6-128 (KTSFTFEIEN…NDKLIITVEV (123 aa)). A coiled-coil region spans residues 146–337 (EFKELQDLYN…NLELMVLDFK (192 aa)).

The polypeptide is MATH domain and coiled-coil domain-containing protein At2g42475 (Arabidopsis thaliana (Mouse-ear cress)).